The chain runs to 385 residues: Aryl-alcohol dehydrogenase [NADP(+)] (385 aa).

Catalysis depends on Tyr76, which acts as the Proton donor. NADP(+) is bound at residue 238 to 248 (NVLCAGKIRTD).

The protein belongs to the aldo/keto reductase family. Aldo/keto reductase 2 subfamily. Post-translationally, the N-terminus is blocked.

The catalysed reaction is an aromatic primary alcohol + NADP(+) = an aromatic aldehyde + NADPH + H(+). This Phanerodontia chrysosporium (White-rot fungus) protein is Aryl-alcohol dehydrogenase [NADP(+)].